Here is a 324-residue protein sequence, read N- to C-terminus: Acetyl-coenzyme A carboxylase carboxyl transferase subunit alpha (324 aa).

A CoA carboxyltransferase C-terminal domain is found at 37–291; the sequence is KLERRLDKLK…QNFILQEWLR (255 aa).

The protein belongs to the AccA family. In terms of assembly, acetyl-CoA carboxylase is a heterohexamer composed of biotin carboxyl carrier protein (AccB), biotin carboxylase (AccC) and two subunits each of ACCase subunit alpha (AccA) and ACCase subunit beta (AccD).

The protein resides in the cytoplasm. The enzyme catalyses N(6)-carboxybiotinyl-L-lysyl-[protein] + acetyl-CoA = N(6)-biotinyl-L-lysyl-[protein] + malonyl-CoA. Its pathway is lipid metabolism; malonyl-CoA biosynthesis; malonyl-CoA from acetyl-CoA: step 1/1. In terms of biological role, component of the acetyl coenzyme A carboxylase (ACC) complex. First, biotin carboxylase catalyzes the carboxylation of biotin on its carrier protein (BCCP) and then the CO(2) group is transferred by the carboxyltransferase to acetyl-CoA to form malonyl-CoA. The sequence is that of Acetyl-coenzyme A carboxylase carboxyl transferase subunit alpha from Chlamydia caviae (strain ATCC VR-813 / DSM 19441 / 03DC25 / GPIC) (Chlamydophila caviae).